Consider the following 878-residue polypeptide: AP-5 complex subunit beta-1 (878 aa).

The disordered stretch occupies residues 234–260; sequence RLQPQAPSWPAAEEGEGERSLTAREHS. Over residues 250 to 260 the composition is skewed to basic and acidic residues; that stretch reads GERSLTAREHS.

In terms of assembly, probably part of the adaptor protein complex 5 (AP-5), a tetramer composed of AP5B1, AP5M1, AP5S1 and AP5Z1. Interacts with ZFYVE26 and SPG11.

Its function is as follows. As part of AP-5, a probable fifth adaptor protein complex it may be involved in endosomal transport. This Homo sapiens (Human) protein is AP-5 complex subunit beta-1 (AP5B1).